The primary structure comprises 339 residues: NADH-quinone oxidoreductase subunit H (339 aa).

8 helical membrane passes run 19 to 39, 87 to 107, 120 to 140, 153 to 173, 191 to 211, 253 to 273, 275 to 295, and 310 to 330; these read LLKI…LTLA, FLLG…VVPF, LLYI…AGWA, SAAQ…GVLM, FWEW…ISAV, ILVA…PVPF, PDSI…FLWF, and LGWK…GAMM.

This sequence belongs to the complex I subunit 1 family. As to quaternary structure, NDH-1 is composed of 14 different subunits. Subunits NuoA, H, J, K, L, M, N constitute the membrane sector of the complex.

It localises to the cell inner membrane. The enzyme catalyses a quinone + NADH + 5 H(+)(in) = a quinol + NAD(+) + 4 H(+)(out). In terms of biological role, NDH-1 shuttles electrons from NADH, via FMN and iron-sulfur (Fe-S) centers, to quinones in the respiratory chain. The immediate electron acceptor for the enzyme in this species is believed to be ubiquinone. Couples the redox reaction to proton translocation (for every two electrons transferred, four hydrogen ions are translocated across the cytoplasmic membrane), and thus conserves the redox energy in a proton gradient. This subunit may bind ubiquinone. The protein is NADH-quinone oxidoreductase subunit H of Methylobacillus flagellatus (strain ATCC 51484 / DSM 6875 / VKM B-1610 / KT).